The following is an 86-amino-acid chain: DNA-directed RNA polymerase subunit Rpo11 (86 aa).

It belongs to the archaeal Rpo11/eukaryotic RPB11/RPC19 RNA polymerase subunit family. In terms of assembly, part of the RNA polymerase complex.

It localises to the cytoplasm. The catalysed reaction is RNA(n) + a ribonucleoside 5'-triphosphate = RNA(n+1) + diphosphate. DNA-dependent RNA polymerase (RNAP) catalyzes the transcription of DNA into RNA using the four ribonucleoside triphosphates as substrates. In Archaeoglobus fulgidus (strain ATCC 49558 / DSM 4304 / JCM 9628 / NBRC 100126 / VC-16), this protein is DNA-directed RNA polymerase subunit Rpo11.